The primary structure comprises 163 residues: Cytochrome b6-f complex subunit 4 (163 aa).

3 helical membrane-spanning segments follow: residues 36–56, 95–115, and 131–151; these read LLYIFPVVILGTIACNGGLAV, LLGVLLMVSVPAGLLTVPFLE, and TVFLVGTLVALWLGIGATLPI.

Belongs to the cytochrome b family. PetD subfamily. The 4 large subunits of the cytochrome b6-f complex are cytochrome b6, subunit IV (17 kDa polypeptide, petD), cytochrome f and the Rieske protein, while the 4 small subunits are petG, petL, petM and petN. The complex functions as a dimer.

Its subcellular location is the plastid. The protein resides in the chloroplast thylakoid membrane. Its function is as follows. Component of the cytochrome b6-f complex, which mediates electron transfer between photosystem II (PSII) and photosystem I (PSI), cyclic electron flow around PSI, and state transitions. This Pelargonium hortorum (Common geranium) protein is Cytochrome b6-f complex subunit 4.